We begin with the raw amino-acid sequence, 150 residues long: Large-conductance mechanosensitive channel (150 aa).

2 helical membrane passes run 19–39 (VGII…SDVL) and 85–105 (GIFL…FMLI).

Belongs to the MscL family. As to quaternary structure, homopentamer.

The protein resides in the cell inner membrane. Functionally, channel that opens in response to stretch forces in the membrane lipid bilayer. May participate in the regulation of osmotic pressure changes within the cell. The chain is Large-conductance mechanosensitive channel from Chlorobium limicola (strain DSM 245 / NBRC 103803 / 6330).